A 559-amino-acid polypeptide reads, in one-letter code: Serine/threonine-protein kinase bur1 (559 aa).

One can recognise a Protein kinase domain in the interval 40–341 (YEVLGKLGEG…AIDALNHPYF (302 aa)). ATP contacts are provided by residues 46 to 54 (LGEGTFGEV) and Lys-69. Asp-171 functions as the Proton acceptor in the catalytic mechanism. Basic and acidic residues predominate over residues 359–372 (SHEFDRRKFQDRKA). The disordered stretch occupies residues 359-559 (SHEFDRRKFQ…GRDRDAYARR (201 aa)). Residues 400 to 414 (GRDGYGGGGRNGANG) show a composition bias toward gly residues. Composition is skewed to basic and acidic residues over residues 457–467 (DHTDGYRDRPP), 491–534 (YDRD…DSRT), and 543–559 (PVRD…YARR).

It belongs to the protein kinase superfamily. CMGC Ser/Thr protein kinase family. CDC2/CDKX subfamily.

The protein localises to the nucleus. The catalysed reaction is L-seryl-[protein] + ATP = O-phospho-L-seryl-[protein] + ADP + H(+). It catalyses the reaction L-threonyl-[protein] + ATP = O-phospho-L-threonyl-[protein] + ADP + H(+). The enzyme catalyses [DNA-directed RNA polymerase] + ATP = phospho-[DNA-directed RNA polymerase] + ADP + H(+). Functionally, serine/threonine-protein kinase involved in transcription regulation. Phosphorylates the mus-8/ubc2 ubiquitin-conjugating enzyme (E2), leading to monoubiquitination of histone H2B and the silencing of telomeric-associated genes. Also required for histone H3 methylation. Necessary for the recovery from pheromone-induced growth arrest in the cell cycle G1 phase. The sequence is that of Serine/threonine-protein kinase bur1 (stk-1) from Neurospora crassa (strain ATCC 24698 / 74-OR23-1A / CBS 708.71 / DSM 1257 / FGSC 987).